A 93-amino-acid chain; its full sequence is Large ribosomal subunit protein bL31 (93 aa).

A disordered region spans residues 72–93; that stretch reads VKTVSSNADNQKETTEELIKNK. The segment covering 81–93 has biased composition (basic and acidic residues); the sequence is NQKETTEELIKNK.

It belongs to the bacterial ribosomal protein bL31 family. Type A subfamily. In terms of assembly, part of the 50S ribosomal subunit.

Its function is as follows. Binds the 23S rRNA. The sequence is that of Large ribosomal subunit protein bL31 from Onion yellows phytoplasma (strain OY-M).